Reading from the N-terminus, the 154-residue chain is Myoglobin (154 aa).

The region spanning 2-148 (GLSEGEWQLV…FRKDIAAKYK (147 aa)) is the Globin domain. Phosphoserine is present on Ser4. Position 65 (His65) interacts with nitrite. His65 is an O2 binding site. The residue at position 68 (Thr68) is a Phosphothreonine. His94 is a heme b binding site.

As to quaternary structure, monomer.

It is found in the cytoplasm. The protein resides in the sarcoplasm. It catalyses the reaction Fe(III)-heme b-[protein] + nitric oxide + H2O = Fe(II)-heme b-[protein] + nitrite + 2 H(+). It carries out the reaction H2O2 + AH2 = A + 2 H2O. Monomeric heme protein which primary function is to store oxygen and facilitate its diffusion within muscle tissues. Reversibly binds oxygen through a pentacoordinated heme iron and enables its timely and efficient release as needed during periods of heightened demand. Depending on the oxidative conditions of tissues and cells, and in addition to its ability to bind oxygen, it also has a nitrite reductase activity whereby it regulates the production of bioactive nitric oxide. Under stress conditions, like hypoxia and anoxia, it also protects cells against reactive oxygen species thanks to its pseudoperoxidase activity. The protein is Myoglobin (MB) of Delphinapterus leucas (Beluga whale).